Consider the following 236-residue polypeptide: Auxin-responsive protein IAA13 (236 aa).

Disordered regions lie at residues 1–24, 52–93, and 105–130; these read MAGA…GGAA, EAAA…WPPV, and SVKS…GSNS. The EAR-like (transcriptional repression) motif lies at 12 to 16; it reads LRLGL. Over residues 52-61 the composition is skewed to low complexity; that stretch reads EAAAGKAEAP. A compositionally biased stretch (basic and acidic residues) spans 62 to 81; sequence AAEKAKRPAEAAAADAEKPP. Low complexity predominate over residues 117 to 130; it reads QQQQPAANASGSNS. The region spanning 131 to 218 is the PB1 domain; it reads SAFVKVSMDG…SCKRLRIMKG (88 aa).

Belongs to the Aux/IAA family. In terms of assembly, homodimers and heterodimers.

It localises to the nucleus. Functionally, aux/IAA proteins are short-lived transcriptional factors that function as repressors of early auxin response genes at low auxin concentrations. The protein is Auxin-responsive protein IAA13 (IAA13) of Oryza sativa subsp. japonica (Rice).